We begin with the raw amino-acid sequence, 238 residues long: tRNA1(Val) (adenine(37)-N6)-methyltransferase (238 aa).

Belongs to the methyltransferase superfamily. tRNA (adenine-N(6)-)-methyltransferase family.

The protein localises to the cytoplasm. The catalysed reaction is adenosine(37) in tRNA1(Val) + S-adenosyl-L-methionine = N(6)-methyladenosine(37) in tRNA1(Val) + S-adenosyl-L-homocysteine + H(+). Its function is as follows. Specifically methylates the adenine in position 37 of tRNA(1)(Val) (anticodon cmo5UAC). This is tRNA1(Val) (adenine(37)-N6)-methyltransferase from Shewanella baltica (strain OS195).